A 599-amino-acid chain; its full sequence is Sulfite reductase [NADPH] flavoprotein alpha-component (599 aa).

Positions 64–202 (ITIISASQTG…AASEWRARVV (139 aa)) constitute a Flavodoxin-like domain. FMN contacts are provided by residues 70-75 (SQTGNA), 117-120 (STQG), and 153-162 (LGDSSYEFFC). Residues 234–448 (DAPLVASLSV…IEHNDNFRLP (215 aa)) form the FAD-binding FR-type domain. Residues T322, A356, 386–389 (RLYS), 404–406 (TVG), Y410, and 419–422 (GGAS) each bind FAD. NADP(+) is bound by residues 519-520 (SR), 525-529 (KVYVQ), and D561. Residue Y599 coordinates FAD.

Belongs to the NADPH-dependent sulphite reductase flavoprotein subunit CysJ family. The protein in the N-terminal section; belongs to the flavodoxin family. It in the C-terminal section; belongs to the flavoprotein pyridine nucleotide cytochrome reductase family. Alpha(8)-beta(8). The alpha component is a flavoprotein, the beta component is a hemoprotein. The cofactor is FAD. FMN serves as cofactor.

It catalyses the reaction hydrogen sulfide + 3 NADP(+) + 3 H2O = sulfite + 3 NADPH + 4 H(+). Its pathway is sulfur metabolism; hydrogen sulfide biosynthesis; hydrogen sulfide from sulfite (NADPH route): step 1/1. Functionally, component of the sulfite reductase complex that catalyzes the 6-electron reduction of sulfite to sulfide. This is one of several activities required for the biosynthesis of L-cysteine from sulfate. The flavoprotein component catalyzes the electron flow from NADPH -&gt; FAD -&gt; FMN to the hemoprotein component. In Escherichia coli O157:H7, this protein is Sulfite reductase [NADPH] flavoprotein alpha-component.